We begin with the raw amino-acid sequence, 241 residues long: Ribonuclease HII (241 aa).

In terms of domain architecture, RNase H type-2 spans asparagine 57–glycine 241. 3 residues coordinate a divalent metal cation: aspartate 63, glutamate 64, and aspartate 155.

The protein belongs to the RNase HII family. Mn(2+) serves as cofactor. The cofactor is Mg(2+).

Its subcellular location is the cytoplasm. The catalysed reaction is Endonucleolytic cleavage to 5'-phosphomonoester.. In terms of biological role, endonuclease that specifically degrades the RNA of RNA-DNA hybrids. The sequence is that of Ribonuclease HII from Caldanaerobacter subterraneus subsp. tengcongensis (strain DSM 15242 / JCM 11007 / NBRC 100824 / MB4) (Thermoanaerobacter tengcongensis).